A 268-amino-acid polypeptide reads, in one-letter code: MNMKEISKVVDLVRESNPLVHNITNVVVTNFTANGLLALGASPVMAYAKEEVAEMASIAGALVLNMGTLRPEEVEAMLLAGKSANVNNVPVLFDPVGAGATSYRTEVARHIPAEIELAIIRGNAAEIANVINERWEIKGVDAGAGNGNVVSIAKQAADELNTVAVITGEEDVVTDGERTIVIQNGHSILTKVTGTGCLLTSVIGAFVAVEKDYVKAAIAALTFYGVAAELAAAKTVEKGPGSFQIEFLNQLANTTSGDIEKYGKIEVI.

Methionine 45 contributes to the substrate binding site. Arginine 121 and threonine 167 together coordinate ATP. A substrate-binding site is contributed by glycine 194.

Belongs to the Thz kinase family. The cofactor is Mg(2+).

It catalyses the reaction 5-(2-hydroxyethyl)-4-methylthiazole + ATP = 4-methyl-5-(2-phosphooxyethyl)-thiazole + ADP + H(+). It participates in cofactor biosynthesis; thiamine diphosphate biosynthesis; 4-methyl-5-(2-phosphoethyl)-thiazole from 5-(2-hydroxyethyl)-4-methylthiazole: step 1/1. Catalyzes the phosphorylation of the hydroxyl group of 4-methyl-5-beta-hydroxyethylthiazole (THZ). This Bacillus cereus (strain ATCC 10987 / NRS 248) protein is Hydroxyethylthiazole kinase.